Reading from the N-terminus, the 282-residue chain is Ribosome biogenesis GTPase A (282 aa).

One can recognise a CP-type G domain in the interval 14-178 (RREVTEKLKL…LLDTPGILWP (165 aa)). GTP contacts are provided by residues 58 to 61 (NKAD), 86 to 87 (NS), 130 to 135 (NVGKST), and Gly-174.

The protein belongs to the TRAFAC class YlqF/YawG GTPase family. MTG1 subfamily. Interacts with ctc. Interacts with the immature 50S ribosome subunit. 2 molecules of rbgA bind to one 50S subunit.

It localises to the cytoplasm. Its function is as follows. Essential protein that is required for a late step of 50S ribosomal subunit assembly. Has GTPase activity that is stimulated by interaction with the immature 50S ribosome subunit. Binds to the 23S rRNA. Required for the association of ribosomal proteins rplP and rpmA with the large subunit. This Bacillus pumilus (strain SAFR-032) protein is Ribosome biogenesis GTPase A.